Reading from the N-terminus, the 306-residue chain is tRNA dimethylallyltransferase 2 (306 aa).

19-26 (GATASGKT) is a binding site for ATP. Residue 21–26 (TASGKT) participates in substrate binding. The interval 44-47 (DSRQ) is interaction with substrate tRNA.

Belongs to the IPP transferase family. As to quaternary structure, monomer. It depends on Mg(2+) as a cofactor.

The catalysed reaction is adenosine(37) in tRNA + dimethylallyl diphosphate = N(6)-dimethylallyladenosine(37) in tRNA + diphosphate. Functionally, catalyzes the transfer of a dimethylallyl group onto the adenine at position 37 in tRNAs that read codons beginning with uridine, leading to the formation of N6-(dimethylallyl)adenosine (i(6)A). The chain is tRNA dimethylallyltransferase 2 from Citrifermentans bemidjiense (strain ATCC BAA-1014 / DSM 16622 / JCM 12645 / Bem) (Geobacter bemidjiensis).